The following is a 101-amino-acid chain: Small ribosomal subunit protein uS10 (101 aa).

Belongs to the universal ribosomal protein uS10 family. Part of the 30S ribosomal subunit.

Its function is as follows. Involved in the binding of tRNA to the ribosomes. This Phocaeicola vulgatus (strain ATCC 8482 / DSM 1447 / JCM 5826 / CCUG 4940 / NBRC 14291 / NCTC 11154) (Bacteroides vulgatus) protein is Small ribosomal subunit protein uS10.